Consider the following 513-residue polypeptide: ATP synthase subunit alpha (513 aa).

169-176 (GDRQTGKT) contacts ATP.

It belongs to the ATPase alpha/beta chains family. F-type ATPases have 2 components, CF(1) - the catalytic core - and CF(0) - the membrane proton channel. CF(1) has five subunits: alpha(3), beta(3), gamma(1), delta(1), epsilon(1). CF(0) has three main subunits: a(1), b(2) and c(9-12). The alpha and beta chains form an alternating ring which encloses part of the gamma chain. CF(1) is attached to CF(0) by a central stalk formed by the gamma and epsilon chains, while a peripheral stalk is formed by the delta and b chains.

It localises to the cell inner membrane. It catalyses the reaction ATP + H2O + 4 H(+)(in) = ADP + phosphate + 5 H(+)(out). Produces ATP from ADP in the presence of a proton gradient across the membrane. The alpha chain is a regulatory subunit. This is ATP synthase subunit alpha from Yersinia pseudotuberculosis serotype O:1b (strain IP 31758).